The sequence spans 151 residues: Ribosomal RNA large subunit methyltransferase H (151 aa).

S-adenosyl-L-methionine contacts are provided by residues L73, G100, and 119–124 (LSKMTM).

This sequence belongs to the RNA methyltransferase RlmH family. In terms of assembly, homodimer.

The protein localises to the cytoplasm. The catalysed reaction is pseudouridine(1915) in 23S rRNA + S-adenosyl-L-methionine = N(3)-methylpseudouridine(1915) in 23S rRNA + S-adenosyl-L-homocysteine + H(+). Its function is as follows. Specifically methylates the pseudouridine at position 1915 (m3Psi1915) in 23S rRNA. This Campylobacter concisus (strain 13826) protein is Ribosomal RNA large subunit methyltransferase H.